Here is a 423-residue protein sequence, read N- to C-terminus: Histidine--tRNA ligase (423 aa).

This sequence belongs to the class-II aminoacyl-tRNA synthetase family. In terms of assembly, homodimer.

It localises to the cytoplasm. It carries out the reaction tRNA(His) + L-histidine + ATP = L-histidyl-tRNA(His) + AMP + diphosphate + H(+). This is Histidine--tRNA ligase from Shewanella loihica (strain ATCC BAA-1088 / PV-4).